Here is a 99-residue protein sequence, read N- to C-terminus: Putative pterin-4-alpha-carbinolamine dehydratase (99 aa).

The protein belongs to the pterin-4-alpha-carbinolamine dehydratase family.

It catalyses the reaction (4aS,6R)-4a-hydroxy-L-erythro-5,6,7,8-tetrahydrobiopterin = (6R)-L-erythro-6,7-dihydrobiopterin + H2O. The protein is Putative pterin-4-alpha-carbinolamine dehydratase of Synechococcus sp. (strain CC9311).